Reading from the N-terminus, the 364-residue chain is Dual-specificity RNA methyltransferase RlmN (364 aa).

The active-site Proton acceptor is the Glu91. The Radical SAM core domain maps to 102-337; it reads GTLRITQCLS…AIIRKSKGQD (236 aa). A disulfide bond links Cys109 and Cys342. Residues Cys116, Cys120, and Cys123 each coordinate [4Fe-4S] cluster. Residues 169-170, Ser201, 223-225, and Asn299 each bind S-adenosyl-L-methionine; these read GE and SLH. Residue Cys342 is the S-methylcysteine intermediate of the active site.

This sequence belongs to the radical SAM superfamily. RlmN family. Requires [4Fe-4S] cluster as cofactor.

The protein resides in the cytoplasm. It catalyses the reaction adenosine(2503) in 23S rRNA + 2 reduced [2Fe-2S]-[ferredoxin] + 2 S-adenosyl-L-methionine = 2-methyladenosine(2503) in 23S rRNA + 5'-deoxyadenosine + L-methionine + 2 oxidized [2Fe-2S]-[ferredoxin] + S-adenosyl-L-homocysteine. The catalysed reaction is adenosine(37) in tRNA + 2 reduced [2Fe-2S]-[ferredoxin] + 2 S-adenosyl-L-methionine = 2-methyladenosine(37) in tRNA + 5'-deoxyadenosine + L-methionine + 2 oxidized [2Fe-2S]-[ferredoxin] + S-adenosyl-L-homocysteine. Functionally, specifically methylates position 2 of adenine 2503 in 23S rRNA and position 2 of adenine 37 in tRNAs. m2A2503 modification seems to play a crucial role in the proofreading step occurring at the peptidyl transferase center and thus would serve to optimize ribosomal fidelity. In Nitratidesulfovibrio vulgaris (strain DP4) (Desulfovibrio vulgaris), this protein is Dual-specificity RNA methyltransferase RlmN.